We begin with the raw amino-acid sequence, 450 residues long: Phosphoglucosamine mutase (450 aa).

The active-site Phosphoserine intermediate is Ser-100. 4 residues coordinate Mg(2+): Ser-100, Asp-240, Asp-242, and Asp-244. At Ser-100 the chain carries Phosphoserine.

This sequence belongs to the phosphohexose mutase family. It depends on Mg(2+) as a cofactor. Post-translationally, activated by phosphorylation.

The catalysed reaction is alpha-D-glucosamine 1-phosphate = D-glucosamine 6-phosphate. Functionally, catalyzes the conversion of glucosamine-6-phosphate to glucosamine-1-phosphate. This is Phosphoglucosamine mutase from Desulforudis audaxviator (strain MP104C).